The following is a 208-amino-acid chain: dITP/XTP pyrophosphatase (208 aa).

16 to 21 (TGNAGK) is a substrate binding site. Residues Glu46 and Asp75 each contribute to the Mg(2+) site. The active-site Proton acceptor is Asp75. Residues Ser76, 155–158 (FGYD), Lys178, and 183–184 (HR) contribute to the substrate site.

Belongs to the HAM1 NTPase family. Homodimer. Mg(2+) is required as a cofactor.

It catalyses the reaction XTP + H2O = XMP + diphosphate + H(+). It carries out the reaction dITP + H2O = dIMP + diphosphate + H(+). The catalysed reaction is ITP + H2O = IMP + diphosphate + H(+). Its function is as follows. Pyrophosphatase that catalyzes the hydrolysis of nucleoside triphosphates to their monophosphate derivatives, with a high preference for the non-canonical purine nucleotides XTP (xanthosine triphosphate), dITP (deoxyinosine triphosphate) and ITP. Seems to function as a house-cleaning enzyme that removes non-canonical purine nucleotides from the nucleotide pool, thus preventing their incorporation into DNA/RNA and avoiding chromosomal lesions. The sequence is that of dITP/XTP pyrophosphatase from Deinococcus deserti (strain DSM 17065 / CIP 109153 / LMG 22923 / VCD115).